The primary structure comprises 200 residues: Large ribosomal subunit protein uL4 (200 aa).

A disordered region spans residues 43–71; it reads RAQKTRAEVSGSGKKPWRQKGTGRARSGD.

Belongs to the universal ribosomal protein uL4 family. As to quaternary structure, part of the 50S ribosomal subunit.

In terms of biological role, one of the primary rRNA binding proteins, this protein initially binds near the 5'-end of the 23S rRNA. It is important during the early stages of 50S assembly. It makes multiple contacts with different domains of the 23S rRNA in the assembled 50S subunit and ribosome. Forms part of the polypeptide exit tunnel. In Histophilus somni (strain 2336) (Haemophilus somnus), this protein is Large ribosomal subunit protein uL4.